A 288-amino-acid polypeptide reads, in one-letter code: Aquaporin NIP2-1 (288 aa).

Position 1 is an N-acetylmethionine (Met1). 2 helical membrane passes run 50–70 (LLAE…AIAV) and 77–97 (VVTL…LVYC). The NPA 1 motif lies at 106-108 (NPA). Helical transmembrane passes span 126-146 (AYIT…RLLF), 170-190 (LQAF…VCAV), and 202-222 (GLII…VSGA). The NPA 2 signature appears at 225-227 (NPA). Residues 234–254 (LVWGCYKGIWIYLLAPTLGAV) traverse the membrane as a helical segment. Residue Ser278 is modified to Phosphoserine.

It belongs to the MIP/aquaporin (TC 1.A.8) family. NIP (TC 1.A.8.12) subfamily. In terms of tissue distribution, specifically expressed in roots with high expression in root elongation zone and root stele.

The protein resides in the endoplasmic reticulum membrane. Low water transport activity in yeast cells. This chain is Aquaporin NIP2-1 (NIP2-1), found in Arabidopsis thaliana (Mouse-ear cress).